The primary structure comprises 114 residues: SNF1-related protein kinase regulatory subunit beta-3 (114 aa).

The segment at 26 to 50 (SYNNVYSSTEDETRDPPAVPPHLQH) is disordered. The tract at residues 40–114 (DPPAVPPHLQ…PVQRRGSANV (75 aa)) is association with SNF1 complex (ASC).

The protein belongs to the 5'-AMP-activated protein kinase beta subunit family. Subunit of a probable heterotrimeric complex consisting of an alpha catalytic (KIN10 or KIN11) subunit, and a beta (KINB) and a gamma (KING or SNF4) non-catalytic regulatory subunits. Interacts with KIN10, KIN11 and SNF4. Interacts with FLZ1, FLZ2, FLZ3, FLZ4, FLZ5, FLZ7, FLZ8, FLZ10, FLZ13, FLZ14, FLZ15 and FLZ16. Expressed in rosette (at the protein level). Expressed in the whole plant and at the different developmental stage with a higher level in stems.

Its function is as follows. Regulatory subunit of the probable trimeric SNF1-related protein kinase (SnRK) complex, which may play a role in a signal transduction cascade regulating gene expression and carbohydrate metabolism in higher plants. In Arabidopsis thaliana (Mouse-ear cress), this protein is SNF1-related protein kinase regulatory subunit beta-3 (KINB3).